The chain runs to 230 residues: Somatolactin (230 aa).

The signal sequence occupies residues 1–23 (MIKTKVLQAWMGIWLCAVNGLLG). 3 cysteine pairs are disulfide-bonded: cysteine 28-cysteine 38, cysteine 87-cysteine 202, and cysteine 219-cysteine 227. N-linked (GlcNAc...) asparagine glycosylation is present at asparagine 177.

The protein belongs to the somatotropin/prolactin family.

Its subcellular location is the secreted. The chain is Somatolactin from Ictalurus punctatus (Channel catfish).